The following is a 471-amino-acid chain: Adenosylhomocysteinase (471 aa).

The substrate site is built by Thr-60, Asp-135, and Glu-196. An NAD(+)-binding site is contributed by 197–199 (TTT). Lys-226 and Asp-230 together coordinate substrate. Residues Asn-231, 260-265 (GYGDVG), Glu-283, Asn-318, 339-341 (IGH), and Asn-387 each bind NAD(+).

The protein belongs to the adenosylhomocysteinase family. Requires NAD(+) as cofactor.

The protein localises to the cytoplasm. It catalyses the reaction S-adenosyl-L-homocysteine + H2O = L-homocysteine + adenosine. The protein operates within amino-acid biosynthesis; L-homocysteine biosynthesis; L-homocysteine from S-adenosyl-L-homocysteine: step 1/1. Functionally, may play a key role in the regulation of the intracellular concentration of adenosylhomocysteine. The sequence is that of Adenosylhomocysteinase from Chlorobium phaeobacteroides (strain DSM 266 / SMG 266 / 2430).